Consider the following 249-residue polypeptide: MSGFQMPQANFKAGFVRENFNKIAKKYDRFNDWNSFLLHRVWKNHLVREIENNFSGHLHVLDLCCGTGDISLRLENSSFVDHVTCVDFSENMLEIAKTRLKKQAQKGRVHFELGDATKLIQFQNSQFDVVSIGFGLRNVDNLSKAIGEIFRVLKPGGMFLNLDVGKVKNPWIRWIADFYFFKIVPILGYILWGGKNEMFDYLPVSSLSYPDQETLQLILEKEGFQRVQYKNFVFGNVVLHVAKKPSEKT.

Residues Thr-67, Asp-87, and 115-116 (DA) contribute to the S-adenosyl-L-methionine site.

The protein belongs to the class I-like SAM-binding methyltransferase superfamily. MenG/UbiE family.

The catalysed reaction is a 2-demethylmenaquinol + S-adenosyl-L-methionine = a menaquinol + S-adenosyl-L-homocysteine + H(+). Its pathway is quinol/quinone metabolism; menaquinone biosynthesis; menaquinol from 1,4-dihydroxy-2-naphthoate: step 2/2. In terms of biological role, methyltransferase required for the conversion of demethylmenaquinol (DMKH2) to menaquinol (MKH2). The polypeptide is Demethylmenaquinone methyltransferase (Leptospira interrogans serogroup Icterohaemorrhagiae serovar copenhageni (strain Fiocruz L1-130)).